We begin with the raw amino-acid sequence, 361 residues long: MERVNGEDIWQDREIRFDVDHKLLRLINGEIQVAKIEHVEDTKGNNGDRGTMRVTNLRLIWHAASMPRINITIGWNAITGVQSKQTTSLVTRNRGISNEAIYVLAKVSATTTKFEFIFTTTNPASHSKLFNTISSISRAYETTKMYRELKMRGVFIREDGTLKILPQETIIEKVNGVWNLSTETGSLGVFVITNIRVVWYAEMNIGYNVSVPYITLYSVRVRESKFGMALVLETTTSSGEYVLGFRVDPAERLQNLLKTVQSLHKAHLLKPIFGVSYVKEIAEKVEPRKDDDEIDIIDNNEDDVEIDDKIRPDAFASYFDGEHTATDEKQLPVLNPELGLAIEPIRNGFTLHDLWNIHVDV.

The protein belongs to the BBS5 family. As to quaternary structure, part of BBSome complex, that contains at least bbs-1, bbs-2, bbs-4, bbs-5, osm-12, bbs-8/ttc-8 and bbs-9. Interacts with bbs-4 (via C-terminus); the interaction is direct.

It is found in the cell projection. The protein localises to the cilium membrane. It localises to the cytoplasm. Its subcellular location is the cytoskeleton. The protein resides in the cilium basal body. It is found in the microtubule organizing center. The protein localises to the centrosome. It localises to the centriolar satellite. In terms of biological role, component of the BBSome complex. The BBSome complex is thought to function as a coat complex required for sorting of specific membrane proteins to the primary cilia. The BBSome complex is required for ciliogenesis but is dispensable for centriolar satellite function. Required for BBSome complex ciliary localization but not for the proper complex assembly. Required, redundantly with bbs-4, for cilia biogenesis and both the assembly and movement of intraflagellar transport proteins along the ciliary axoneme. Plays a role in the removal of degraded mechanosensory receptors within the cilia. The protein is BBSome complex member bbs-5 of Caenorhabditis elegans.